We begin with the raw amino-acid sequence, 287 residues long: Phosphatidylserine decarboxylase proenzyme (287 aa).

Catalysis depends on charge relay system; for autoendoproteolytic cleavage activity residues aspartate 89, histidine 146, and serine 252. Catalysis depends on serine 252, which acts as the Schiff-base intermediate with substrate; via pyruvic acid; for decarboxylase activity. Residue serine 252 is modified to Pyruvic acid (Ser); by autocatalysis.

This sequence belongs to the phosphatidylserine decarboxylase family. PSD-B subfamily. Prokaryotic type I sub-subfamily. Heterodimer of a large membrane-associated beta subunit and a small pyruvoyl-containing alpha subunit. The cofactor is pyruvate. In terms of processing, is synthesized initially as an inactive proenzyme. Formation of the active enzyme involves a self-maturation process in which the active site pyruvoyl group is generated from an internal serine residue via an autocatalytic post-translational modification. Two non-identical subunits are generated from the proenzyme in this reaction, and the pyruvate is formed at the N-terminus of the alpha chain, which is derived from the carboxyl end of the proenzyme. The autoendoproteolytic cleavage occurs by a canonical serine protease mechanism, in which the side chain hydroxyl group of the serine supplies its oxygen atom to form the C-terminus of the beta chain, while the remainder of the serine residue undergoes an oxidative deamination to produce ammonia and the pyruvoyl prosthetic group on the alpha chain. During this reaction, the Ser that is part of the protease active site of the proenzyme becomes the pyruvoyl prosthetic group, which constitutes an essential element of the active site of the mature decarboxylase.

It localises to the cell membrane. The enzyme catalyses a 1,2-diacyl-sn-glycero-3-phospho-L-serine + H(+) = a 1,2-diacyl-sn-glycero-3-phosphoethanolamine + CO2. It functions in the pathway phospholipid metabolism; phosphatidylethanolamine biosynthesis; phosphatidylethanolamine from CDP-diacylglycerol: step 2/2. Its function is as follows. Catalyzes the formation of phosphatidylethanolamine (PtdEtn) from phosphatidylserine (PtdSer). The polypeptide is Phosphatidylserine decarboxylase proenzyme (Shewanella pealeana (strain ATCC 700345 / ANG-SQ1)).